A 450-amino-acid chain; its full sequence is Glucose-6-phosphate isomerase (450 aa).

Thr-39 is modified (phosphothreonine). Glu-291 serves as the catalytic Proton donor. Residues His-312 and Lys-426 contribute to the active site.

It belongs to the GPI family.

The protein localises to the cytoplasm. It catalyses the reaction alpha-D-glucose 6-phosphate = beta-D-fructose 6-phosphate. It participates in carbohydrate biosynthesis; gluconeogenesis. It functions in the pathway carbohydrate degradation; glycolysis; D-glyceraldehyde 3-phosphate and glycerone phosphate from D-glucose: step 2/4. Functionally, catalyzes the reversible isomerization of glucose-6-phosphate to fructose-6-phosphate. This chain is Glucose-6-phosphate isomerase, found in Bacillus anthracis.